We begin with the raw amino-acid sequence, 114 residues long: MLSGARCRLASALRGTRAPPSAVARRCLHASGSRPLADRGKKTEEPPRDFDPALLEFLVCPLSKKPLRYEASTNELINEELGIAYPIIDGIPNMIPQAARMTRQSKKQEEVEQR.

Residues 1 to 35 (MLSGARCRLASALRGTRAPPSAVARRCLHASGSRP) constitute a mitochondrion transit peptide. Positions 14–49 (RGTRAPPSAVARRCLHASGSRPLADRGKKTEEPPRD) are disordered. A compositionally biased stretch (basic and acidic residues) spans 36–49 (LADRGKKTEEPPRD). One can recognise a TRM112 domain in the interval 51–97 (DPALLEFLVCPLSKKPLRYEASTNELINEELGIAYPIIDGIPNMIPQ).

It belongs to the PREY family. In terms of assembly, interacts (via TRM112 domain) with NDUFAF5; the interaction is direct and stabilizes NDUFAF5 protein. Interacts with COQ5; the interaction is direct, stabilizes COQ5 protein and associates PYURF with COQ enzyme complex.

Its subcellular location is the mitochondrion. In mitochondria, S-adenosylmethionine-dependent methyltransferase chaperone that supports both coenzyme Q biosynthesis, by stabilizing its components, such as COQ5, and NADH:ubiquinone oxidoreductase complex (complex I, MT-ND1) assembly, by stabilizing complex I assembly factors, such as NDUFAF5. This is Protein preY, mitochondrial from Homo sapiens (Human).